Reading from the N-terminus, the 555-residue chain is MSNEDETTRLMSSDEMDYLLETAGINALEEIISQNDSTGINLDTNETAQDSSYDSIRRSPSILSVAKSVEGEHGRRKLLCLYGLVMIICIAESISMTATIPLVMDKVAEGISDENGHYDSVAVQTIVSSISSSTMMIAGAISIFMAGKWGELSDRIGRVRVFKYMSGIRVIGLLTHVFTLSSKMKYHKWAIVLTACIVPSFGGLFALVANGNSYVSDIVKTEHRMVTIGIMMSCIYATMGVGPMFGSFLVKWTHGNGFIPIYTSIAFVILALIICETIMVEPRHETQMAHSQSTYTKRREKLRSQSGSDDARNYQSVTYGKFQIMRLMDLLAPVKKLWLKPDSAGSLVPRHTVILLIVLDILFVCGTTSCMPALILFSTYEYKWHAVELGYFISILGIGRGVVLLVVSPTLLYTLKRIYQHLNHSIDKIDIFCIQFSMIVITLSLFVMIRFGEKTPTSMIIFALLQALSAFCSPTLQSGIIKYTSKKHTGEMFGAMALVRSCVMLVIPPILLKLYGSTVSVNPSLFMYIPFSTSIVAILLTFFLRIYKNPPLDGP.

Topologically, residues 1–83 (MSNEDETTRL…GRRKLLCLYG (83 aa)) are extracellular. A helical membrane pass occupies residues 84–104 (LVMIICIAESISMTATIPLVM). Topologically, residues 105–125 (DKVAEGISDENGHYDSVAVQT) are cytoplasmic. The chain crosses the membrane as a helical span at residues 126-146 (IVSSISSSTMMIAGAISIFMA). At 147–188 (GKWGELSDRIGRVRVFKYMSGIRVIGLLTHVFTLSSKMKYHK) the chain is on the extracellular side. A helical membrane pass occupies residues 189-209 (WAIVLTACIVPSFGGLFALVA). Over 210 to 229 (NGNSYVSDIVKTEHRMVTIG) the chain is Cytoplasmic. The chain crosses the membrane as a helical span at residues 230-250 (IMMSCIYATMGVGPMFGSFLV). Over 251–257 (KWTHGNG) the chain is Extracellular. A helical membrane pass occupies residues 258-278 (FIPIYTSIAFVILALIICETI). The Cytoplasmic segment spans residues 279–356 (MVEPRHETQM…LVPRHTVILL (78 aa)). Residues 289–311 (AHSQSTYTKRREKLRSQSGSDDA) are disordered. Residues 357–377 (IVLDILFVCGTTSCMPALILF) form a helical membrane-spanning segment. The Extracellular segment spans residues 378–386 (STYEYKWHA). A helical transmembrane segment spans residues 387 to 407 (VELGYFISILGIGRGVVLLVV). Residues 408-428 (SPTLLYTLKRIYQHLNHSIDK) are Cytoplasmic-facing. A helical transmembrane segment spans residues 429 to 449 (IDIFCIQFSMIVITLSLFVMI). The Extracellular portion of the chain corresponds to 450–459 (RFGEKTPTSM). A helical membrane pass occupies residues 460–480 (IIFALLQALSAFCSPTLQSGI). Residues 481–491 (IKYTSKKHTGE) are Cytoplasmic-facing. A helical transmembrane segment spans residues 492 to 512 (MFGAMALVRSCVMLVIPPILL). Residues 513-523 (KLYGSTVSVNP) lie on the Extracellular side of the membrane. The chain crosses the membrane as a helical span at residues 524 to 544 (SLFMYIPFSTSIVAILLTFFL). The Cytoplasmic portion of the chain corresponds to 545 to 555 (RIYKNPPLDGP).

The protein localises to the membrane. This is an uncharacterized protein from Saccharomyces cerevisiae (strain ATCC 204508 / S288c) (Baker's yeast).